Consider the following 702-residue polypeptide: Elongation factor G (702 aa).

The tr-type G domain occupies D9–L292. Residues A18 to T25, D91 to H95, and N145 to D148 each bind GTP.

This sequence belongs to the TRAFAC class translation factor GTPase superfamily. Classic translation factor GTPase family. EF-G/EF-2 subfamily.

It is found in the cytoplasm. In terms of biological role, catalyzes the GTP-dependent ribosomal translocation step during translation elongation. During this step, the ribosome changes from the pre-translocational (PRE) to the post-translocational (POST) state as the newly formed A-site-bound peptidyl-tRNA and P-site-bound deacylated tRNA move to the P and E sites, respectively. Catalyzes the coordinated movement of the two tRNA molecules, the mRNA and conformational changes in the ribosome. The sequence is that of Elongation factor G from Oenococcus oeni (strain ATCC BAA-331 / PSU-1).